A 448-amino-acid chain; its full sequence is Tumor necrosis factor receptor superfamily member EDAR (448 aa).

Residues 1 to 26 (MAHVGDCTQTPWLPVLVVSLMCSARA) form the signal peptide. At 27–187 (EYSNCGENEY…LSGQGHLATA (161 aa)) the chain is on the extracellular side. 3 TNFR-Cys repeats span residues 30–71 (NCGE…DYGC), 73–113 (PCPA…DAEC), and 115–148 (PCLP…TKEC). 6 disulfide bridges follow: Cys-31-Cys-44, Cys-47-Cys-60, Cys-50-Cys-71, Cys-74-Cys-87, Cys-93-Cys-113, and Cys-135-Cys-148. A glycan (N-linked (GlcNAc...) asparagine) is linked at Asn-38. A helical transmembrane segment spans residues 188-208 (LIIAMSTIFIMAIAIVLIIMF). At 209-448 (YILKTKPSAP…PPASQPHAAS (240 aa)) the chain is on the cytoplasmic side. Positions 220 to 297 (CCTSHPGKSV…EEPAPDKQGS (78 aa)) are disordered. Over residues 233 to 243 (VSKDEEKKEAP) the composition is skewed to basic and acidic residues. The span at 271 to 283 (DASSENEQLLSRS) shows a compositional bias: polar residues. Positions 358-431 (RMLSSTYNSE…DAVESLCADI (74 aa)) constitute a Death domain.

Binds to EDARADD. Associates with TRAF1, TRAF2, TRAF3 and NIK. As to expression, detected in fetal kidney, lung, skin and cultured neonatal epidermal keratinocytes. Not detected in lymphoblast and fibroblast cell lines.

Its subcellular location is the membrane. Its function is as follows. Receptor for EDA isoform A1, but not for EDA isoform A2. Mediates the activation of NF-kappa-B and JNK. May promote caspase-independent cell death. The sequence is that of Tumor necrosis factor receptor superfamily member EDAR (EDAR) from Homo sapiens (Human).